Reading from the N-terminus, the 110-residue chain is Late cornified envelope protein 2C (110 aa).

Positions M1–C10 are enriched in low complexity. A disordered region spans residues M1–K23. Residues Q11–K23 show a composition bias toward pro residues.

This sequence belongs to the LCE family. In terms of assembly, interacts with CYSRT1; the interaction is direct. Skin-specific. Expression was readily detected in adult trunk skin, adult arm skin, fetal skin, penal skin, vulva, esophagus and tongue. Not expressed in the cervix, rectum, lung, colon, or placenta.

In terms of biological role, precursors of the cornified envelope of the stratum. The polypeptide is Late cornified envelope protein 2C (LCE2C) (Homo sapiens (Human)).